The sequence spans 282 residues: UPF0294 protein VIBHAR_03217 (282 aa).

Belongs to the UPF0294 family.

Its subcellular location is the cytoplasm. This chain is UPF0294 protein VIBHAR_03217, found in Vibrio campbellii (strain ATCC BAA-1116).